A 538-amino-acid polypeptide reads, in one-letter code: Chaperonin GroEL 1 (538 aa).

ATP-binding positions include 29–32 (TLGP), 86–90 (DGTTT), Gly413, and Asp494.

This sequence belongs to the chaperonin (HSP60) family. In terms of assembly, forms a cylinder of 14 subunits composed of two heptameric rings stacked back-to-back. Interacts with the co-chaperonin GroES.

Its subcellular location is the cytoplasm. The catalysed reaction is ATP + H2O + a folded polypeptide = ADP + phosphate + an unfolded polypeptide.. Functionally, together with its co-chaperonin GroES, plays an essential role in assisting protein folding. The GroEL-GroES system forms a nano-cage that allows encapsulation of the non-native substrate proteins and provides a physical environment optimized to promote and accelerate protein folding. The chain is Chaperonin GroEL 1 from Mycobacterium avium (strain 104).